The following is a 184-amino-acid chain: ATP synthase subunit b, chloroplastic (184 aa).

A helical transmembrane segment spans residues 27 to 49 (LATNPINLSVVLGVLIFFGKGVL).

This sequence belongs to the ATPase B chain family. In terms of assembly, F-type ATPases have 2 components, F(1) - the catalytic core - and F(0) - the membrane proton channel. F(1) has five subunits: alpha(3), beta(3), gamma(1), delta(1), epsilon(1). F(0) has four main subunits: a(1), b(1), b'(1) and c(10-14). The alpha and beta chains form an alternating ring which encloses part of the gamma chain. F(1) is attached to F(0) by a central stalk formed by the gamma and epsilon chains, while a peripheral stalk is formed by the delta, b and b' chains.

Its subcellular location is the plastid. It localises to the chloroplast thylakoid membrane. In terms of biological role, f(1)F(0) ATP synthase produces ATP from ADP in the presence of a proton or sodium gradient. F-type ATPases consist of two structural domains, F(1) containing the extramembraneous catalytic core and F(0) containing the membrane proton channel, linked together by a central stalk and a peripheral stalk. During catalysis, ATP synthesis in the catalytic domain of F(1) is coupled via a rotary mechanism of the central stalk subunits to proton translocation. Functionally, component of the F(0) channel, it forms part of the peripheral stalk, linking F(1) to F(0). This is ATP synthase subunit b, chloroplastic from Platanus occidentalis (Sycamore).